The following is a 402-amino-acid chain: Multidrug resistance protein MdtH (402 aa).

Topologically, residues 1–12 (MSRVSQARNLGK) are cytoplasmic. The helical transmembrane segment at 13–33 (YFLLIDNMLVVLGFFVVFPLI) threads the bilayer. The Periplasmic portion of the chain corresponds to 34-98 (SIRFVDQMGW…GFATMGIAHE (65 aa)). A helical transmembrane segment spans residues 99-116 (PWLLWFSCFLSGLGGTLF). Topologically, residues 117–138 (DPPRSALVVKLIRPEQRGRFFS) are cytoplasmic. A helical membrane pass occupies residues 139–159 (LLMMQDSAGAVIGALLGSWLL). Residues 160–164 (QYDFR) are Periplasmic-facing. A helical transmembrane segment spans residues 165 to 185 (LVCATGAILFILCALFNAWLL). The Cytoplasmic segment spans residues 186–213 (PAWKLSTVRTPVREGMRRVMSDKRFVTY). A helical transmembrane segment spans residues 214 to 234 (VLTLAGYYMLAVQVMLMLPIM). At 235–243 (VNDIAGSPA) the chain is on the periplasmic side. Residues 244–264 (AVKWMYAIEACLSLTLLYPIA) traverse the membrane as a helical segment. The Cytoplasmic segment spans residues 265 to 276 (RWSEKRFRLEHR). A helical transmembrane segment spans residues 277–297 (LMAGLLVMSLSMLPIGMVGNL). At 298–299 (QQ) the chain is on the periplasmic side. Residues 300-320 (LFTLICAFYIGSVIAEPARET) traverse the membrane as a helical segment. Over 321-339 (LSASLADARARGSYMGFSR) the chain is Cytoplasmic. Residues 340-360 (LGLAIGGAIGYIGGGWLFDMG) traverse the membrane as a helical segment. The Periplasmic portion of the chain corresponds to 361 to 367 (KALAQPE). A helical transmembrane segment spans residues 368 to 388 (LPWMMLGIIGFITFLALGWQF). The Cytoplasmic segment spans residues 389–402 (SHKRTPRRMLEPGA).

The protein belongs to the major facilitator superfamily. DHA1 family. MdtH (TC 2.A.1.2.21) subfamily.

It is found in the cell inner membrane. The polypeptide is Multidrug resistance protein MdtH (Salmonella agona (strain SL483)).